The chain runs to 181 residues: Thioredoxin-like protein CITRX2, chloroplastic (181 aa).

A chloroplast-targeting transit peptide spans 1–70; the sequence is MQAATLSFQP…PDVATGKYVR (70 aa). The region spanning 72 to 181 is the Thioredoxin domain; sequence DYLVKKVSAK…MMRDIINNDL (110 aa). Active-site nucleophile residues include Cys104 and Cys107. Cys104 and Cys107 are oxidised to a cystine.

It belongs to the thioredoxin family. Plant CITRX-type subfamily.

The protein resides in the plastid. It localises to the chloroplast. In terms of biological role, probable thiol-disulfide oxidoreductase that may play a role in proper chloroplast development. The protein is Thioredoxin-like protein CITRX2, chloroplastic of Nicotiana benthamiana.